We begin with the raw amino-acid sequence, 293 residues long: Undecaprenyl-diphosphatase (293 aa).

8 consecutive transmembrane segments (helical) span residues 3–23 (IALA…EFLP), 43–63 (KGKI…CWEF), 85–105 (VNVI…GKWI), 109–129 (LFNP…ILLA), 178–198 (FALV…MLFG), 203–223 (VATE…TVYE), 238–258 (IFAV…RWLL), and 269–289 (FAWY…TGVI).

This sequence belongs to the UppP family.

It is found in the cell inner membrane. It carries out the reaction di-trans,octa-cis-undecaprenyl diphosphate + H2O = di-trans,octa-cis-undecaprenyl phosphate + phosphate + H(+). Its function is as follows. Catalyzes the dephosphorylation of undecaprenyl diphosphate (UPP). Confers resistance to bacitracin. The polypeptide is Undecaprenyl-diphosphatase (Cupriavidus metallidurans (strain ATCC 43123 / DSM 2839 / NBRC 102507 / CH34) (Ralstonia metallidurans)).